A 1131-amino-acid chain; its full sequence is cGMP-specific 3',5'-cyclic phosphodiesterase (1131 aa).

2 disordered regions span residues 1–26 (MTDVSSPAGGAASPVEMATSSSSAAT) and 42–150 (GVAP…SQQD). Residues 42-63 (GVAPGAVPGPGSAAIPASSSSG) show a composition bias toward low complexity. Over residues 75 to 86 (SNNNRPAATNRS) the composition is skewed to polar residues. Over residues 110-136 (SSSTPSQSPSPSQSPSQASIQTQTSQQ) the composition is skewed to low complexity. 2 GAF domains span residues 255 to 412 (DIDV…GIGI) and 444 to 625 (NLEC…GLGI). In terms of domain architecture, PDEase spans 655–978 (SQDQTEKLTQ…RNWQDLAEKV (324 aa)). The active-site Proton donor is histidine 731. The a divalent metal cation site is built by histidine 735, histidine 771, aspartate 772, and aspartate 882. Disordered regions lie at residues 1019 to 1048 (QQSQHGSEDSHTPEHQRSGSRLSMKKTGAL) and 1078 to 1131 (SHVS…CALL). 2 stretches are compositionally biased toward basic and acidic residues: residues 1024–1035 (GSEDSHTPEHQR) and 1078–1088 (SHVSEDMDDKS). Positions 1097 to 1117 (ASGSMGRMSASSSTSSAGGQM) are enriched in low complexity. The segment covering 1121 to 1131 (SKKRSKLCALL) has biased composition (basic residues). Residue cysteine 1128 is modified to Cysteine methyl ester. Residue cysteine 1128 is the site of S-farnesyl cysteine attachment. Residues 1129–1131 (ALL) constitute a propeptide, removed in mature form.

Belongs to the cyclic nucleotide phosphodiesterase family. As to quaternary structure, interacts with PrBP. Requires a divalent metal cation as cofactor.

The protein resides in the cell membrane. The enzyme catalyses 3',5'-cyclic GMP + H2O = GMP + H(+). Functionally, has a role regulating cGMP transport in Malpighian tubule principal cells. The protein is cGMP-specific 3',5'-cyclic phosphodiesterase of Drosophila erecta (Fruit fly).